Consider the following 298-residue polypeptide: Isochorismatase domain-containing protein 1 (298 aa).

The residue at position 160 (Y160) is a Phosphotyrosine. An N6-succinyllysine modification is found at K279.

The protein belongs to the isochorismatase family.

This chain is Isochorismatase domain-containing protein 1 (ISOC1), found in Bos taurus (Bovine).